A 152-amino-acid chain; its full sequence is S-ribosylhomocysteine lyase (152 aa).

His-53, His-57, and Cys-120 together coordinate Fe cation.

The protein belongs to the LuxS family. In terms of assembly, homodimer. Requires Fe cation as cofactor.

It carries out the reaction S-(5-deoxy-D-ribos-5-yl)-L-homocysteine = (S)-4,5-dihydroxypentane-2,3-dione + L-homocysteine. Functionally, involved in the synthesis of autoinducer 2 (AI-2) which is secreted by bacteria and is used to communicate both the cell density and the metabolic potential of the environment. The regulation of gene expression in response to changes in cell density is called quorum sensing. Catalyzes the transformation of S-ribosylhomocysteine (RHC) to homocysteine (HC) and 4,5-dihydroxy-2,3-pentadione (DPD). This chain is S-ribosylhomocysteine lyase, found in Enterococcus faecalis (strain ATCC 700802 / V583).